The chain runs to 450 residues: Phosphoglucosamine mutase (450 aa).

The active-site Phosphoserine intermediate is the S101. Mg(2+) contacts are provided by S101, D242, D244, and D246. Residue S101 is modified to Phosphoserine.

The protein belongs to the phosphohexose mutase family. Requires Mg(2+) as cofactor. Activated by phosphorylation.

It carries out the reaction alpha-D-glucosamine 1-phosphate = D-glucosamine 6-phosphate. In terms of biological role, catalyzes the conversion of glucosamine-6-phosphate to glucosamine-1-phosphate. The sequence is that of Phosphoglucosamine mutase from Rhodopseudomonas palustris (strain TIE-1).